The following is a 180-amino-acid chain: uncharacterized protein (180 aa).

Coiled coils occupy residues 3 to 82 (LKSL…QKIA) and 95 to 179 (REYE…EKYG).

This is an uncharacterized protein from Aquifex aeolicus (strain VF5).